The following is a 328-amino-acid chain: uncharacterized protein (328 aa).

Positions 72–91 form a DNA-binding region, H-T-H motif; that stretch reads ALQIRDKFNLQRVIIVPDGE.

This sequence belongs to the SorC transcriptional regulatory family.

This is an uncharacterized protein from Escherichia coli (strain K12).